Consider the following 680-residue polypeptide: E3 ubiquitin-protein ligase brl2 (680 aa).

Residues 44 to 72 (RSIQFDELESKIEGLQNLAEEKLKVLATL) adopt a coiled-coil conformation. A disordered region spans residues 206–233 (PQSTKVKEEATTSSKGKDEEKKVSTVEQ). The span at 210–229 (KVKEEATTSSKGKDEEKKVS) shows a compositional bias: basic and acidic residues. Coiled coils occupy residues 261 to 288 (LDSN…TNLK), 353 to 399 (MQND…ETMV), and 485 to 609 (DSLH…LKDT). The segment at 627 to 667 (CSVCNFERWKDRIISLCGHGFCYQCIQKRIETRQRRCPICG) adopts an RING-type zinc-finger fold.

The protein belongs to the BRE1 family. Component of the histone H2B ubiquitin ligase complex (HULC) composed of at least brl1, brl2, rhp6 and shf1.

It is found in the nucleus. It catalyses the reaction S-ubiquitinyl-[E2 ubiquitin-conjugating enzyme]-L-cysteine + [acceptor protein]-L-lysine = [E2 ubiquitin-conjugating enzyme]-L-cysteine + N(6)-ubiquitinyl-[acceptor protein]-L-lysine.. It participates in protein modification; protein ubiquitination. In terms of biological role, E3 ubiquitin-protein ligase which belongs to the histone H2B ubiquitin ligase complex (HULC) which mediates monoubiquitination of histone H2B to form H2BK123ub1. H2BK123ub1 gives a specific tag for epigenetic transcriptional activation and is also a prerequisite for H3K4me and H3K79me formation. This is E3 ubiquitin-protein ligase brl2 (brl2) from Schizosaccharomyces pombe (strain 972 / ATCC 24843) (Fission yeast).